The chain runs to 627 residues: Altered inheritance of mitochondria protein 9, mitochondrial (627 aa).

A mitochondrion-targeting transit peptide spans 1–43 (MIRYTVAGHSRRCVVGASKRVGAIKCITVAATKRFISNKSNEV).

The protein belongs to the AIM9 family.

It localises to the mitochondrion. The sequence is that of Altered inheritance of mitochondria protein 9, mitochondrial (AIM9) from Saccharomyces cerevisiae (strain JAY291) (Baker's yeast).